A 69-amino-acid polypeptide reads, in one-letter code: MVNRTEAAQLLKHLDRDKSGKISSQELMEFLHTVNCPFKKEQVEKFIKQHDKDGDGQLNTDELLDVLCS.

2 consecutive EF-hand domains span residues 2–37 and 38–69; these read VNRTEAAQLLKHLDRDKSGKISSQELMEFLHTVNCP and FKKEQVEKFIKQHDKDGDGQLNTDELLDVLCS. Positions 15, 17, 19, 21, 26, 51, 53, 55, 57, and 62 each coordinate Ca(2+).

The polypeptide is Calcium-binding protein (Schistosoma mansoni (Blood fluke)).